The sequence spans 293 residues: Phosphatidate cytidylyltransferase (293 aa).

8 consecutive transmembrane segments (helical) span residues 6-26, 51-71, 73-93, 97-117, 157-177, 195-215, 218-238, and 273-293; these read IISA…GGWY, IAPA…SATV, PHLT…YLLF, MATI…GYLP, LLVT…AYIM, VEGS…GAWY, WPYW…VSLL, and VFTA…LNNL.

This sequence belongs to the CDS family.

It is found in the cell membrane. The enzyme catalyses a 1,2-diacyl-sn-glycero-3-phosphate + CTP + H(+) = a CDP-1,2-diacyl-sn-glycerol + diphosphate. The protein operates within phospholipid metabolism; CDP-diacylglycerol biosynthesis; CDP-diacylglycerol from sn-glycerol 3-phosphate: step 3/3. The chain is Phosphatidate cytidylyltransferase (cdsA) from Synechocystis sp. (strain ATCC 27184 / PCC 6803 / Kazusa).